A 124-amino-acid polypeptide reads, in one-letter code: UPF0102 protein Mmc1_3298 (124 aa).

Belongs to the UPF0102 family.

The chain is UPF0102 protein Mmc1_3298 from Magnetococcus marinus (strain ATCC BAA-1437 / JCM 17883 / MC-1).